We begin with the raw amino-acid sequence, 563 residues long: Pyruvate decarboxylase isozyme 3 (563 aa).

Residue serine 2 is modified to N-acetylserine. 2 residues coordinate pyruvate: aspartate 28 and histidine 115. A Glycyl lysine isopeptide (Lys-Gly) (interchain with G-Cter in ubiquitin) cross-link involves residue lysine 212. Serine 223 carries the phosphoserine modification. Lysine 233 is covalently cross-linked (Glycyl lysine isopeptide (Lys-Gly) (interchain with G-Cter in ubiquitin)). Threonine 266 is modified (phosphothreonine). A Glycyl lysine isopeptide (Lys-Gly) (interchain with G-Cter in ubiquitin) cross-link involves residue lysine 269. Threonine 353 carries the post-translational modification Phosphothreonine. Thiamine diphosphate is bound by residues threonine 390 and 413–415 (GSI). Aspartate 444 lines the Mg(2+) pocket. Residues 445–446 (GS) and 471–476 (NDGYTI) each bind thiamine diphosphate. Mg(2+) contacts are provided by asparagine 471 and glycine 473. Pyruvate is bound at residue glutamate 477. Lysine 505 is covalently cross-linked (Glycyl lysine isopeptide (Lys-Gly) (interchain with G-Cter in ubiquitin)). Phosphothreonine is present on threonine 522.

This sequence belongs to the TPP enzyme family. Homotetramer. The cofactor is Mg(2+). Thiamine diphosphate serves as cofactor.

The protein resides in the cytoplasm. It catalyses the reaction pyruvate + H(+) = acetaldehyde + CO2. The enzyme catalyses 3-methyl-2-oxobutanoate + H(+) = 2-methylpropanal + CO2. The catalysed reaction is (S)-3-methyl-2-oxopentanoate + H(+) = 2-methylbutanal + CO2. It carries out the reaction indole-3-pyruvate + H(+) = indole-3-acetaldehyde + CO2. It catalyses the reaction 3-phenylpyruvate + H(+) = 2-phenylacetaldehyde + CO2. The enzyme catalyses 2-oxobutanoate + H(+) = propanal + CO2. The catalysed reaction is 2-oxopentanoate + H(+) = butanal + CO2. It carries out the reaction 2 acetaldehyde = acetoin. It catalyses the reaction acetaldehyde + pyruvate + H(+) = acetoin + CO2. It functions in the pathway fermentation; ethanol fermentation. It participates in amino-acid degradation; Ehrlich pathway. Functionally, minor of three pyruvate decarboxylases (PDC1, PDC5, PDC6) implicated in the nonoxidative conversion of pyruvate to acetaldehyde and carbon dioxide during alcoholic fermentation. Most of the produced acetaldehyde is subsequently reduced to ethanol, but some is required for cytosolic acetyl-CoA production for biosynthetic pathways. The enzyme is also one of five 2-oxo acid decarboxylases (PDC1, PDC5, PDC6, ARO10, and THI3) able to decarboxylate more complex 2-oxo acids (alpha-keto-acids) than pyruvate, which seem mainly involved in amino acid catabolism. Here the enzyme catalyzes the decarboxylation of amino acids, which, in a first step, have been transaminated to the corresponding 2-oxo acids. In a third step, the resulting aldehydes are reduced to alcohols, collectively referred to as fusel oils or alcohols. Its preferred substrates are the transaminated amino acids derived from threonine (2-oxobutanoate), norvaline (2-oxopentanoate), valine (3-methyl-2-oxobutanoate, also alpha-keto-isovalerate), isoleucine ((3S)-3-methyl-2-oxopentanoate, also alpha-keto-beta-methylvalerate), phenylalanine (phenylpyruvate), and tryptophan (3-(indol-3-yl)pyruvate), whereas transaminated leucine is no substrate. In a side-reaction the carbanionic intermediate (or active aldehyde) generated by decarboxylation or by activation of an aldehyde can react with an aldehyde via condensation (or carboligation) yielding a 2-hydroxy ketone, collectively called acyloins. The expression level of this protein in the presence of fermentable carbon sources is so low that it cannot compensate for the other two pyruvate decarboxylases to sustain fermentation. The protein is Pyruvate decarboxylase isozyme 3 (PDC6) of Saccharomyces cerevisiae (strain ATCC 204508 / S288c) (Baker's yeast).